The sequence spans 156 residues: MVLVGPKTSASTVESFLKSVFHDDFKKAEKLERTELAYEINKTKHAQYFLVNLETERKNIAEFIRLSNINKEIWRHLVVNLDTEKGLNKVFKTHRKFGHDFRDQRSHHGQAGEFRKREPQQKSKEQSEFSKEKKSFSKSVTKKTVVSKPKETKEEK.

The segment at 98–156 (GHDFRDQRSHHGQAGEFRKREPQQKSKEQSEFSKEKKSFSKSVTKKTVVSKPKETKEEK) is disordered. Basic and acidic residues predominate over residues 113 to 135 (EFRKREPQQKSKEQSEFSKEKKS). Low complexity predominate over residues 137 to 147 (SKSVTKKTVVS).

This sequence belongs to the bacterial ribosomal protein bS6 family.

Its function is as follows. Binds together with bS18 to 16S ribosomal RNA. The protein is Small ribosomal subunit protein bS6 of Mycoplasmopsis synoviae (strain 53) (Mycoplasma synoviae).